A 347-amino-acid polypeptide reads, in one-letter code: DNA-directed RNA polymerase subunit alpha (347 aa).

The segment at Met-1–Asn-226 is alpha N-terminal domain (alpha-NTD). The segment at His-243–Leu-347 is alpha C-terminal domain (alpha-CTD). The tract at residues Thr-326–Leu-347 is disordered.

The protein belongs to the RNA polymerase alpha chain family. In terms of assembly, homodimer. The RNAP catalytic core consists of 2 alpha, 1 beta, 1 beta' and 1 omega subunit. When a sigma factor is associated with the core the holoenzyme is formed, which can initiate transcription.

The catalysed reaction is RNA(n) + a ribonucleoside 5'-triphosphate = RNA(n+1) + diphosphate. In terms of biological role, DNA-dependent RNA polymerase catalyzes the transcription of DNA into RNA using the four ribonucleoside triphosphates as substrates. The protein is DNA-directed RNA polymerase subunit alpha of Mycobacterium leprae (strain TN).